The chain runs to 401 residues: Nodal homolog 3-A (401 aa).

The signal sequence occupies residues 1–18 (MAFLSLFLCLVFSSPLMA). Residues 19–274 (MPPALQGRKA…KVNGFRRLRR (256 aa)) constitute a propeptide that is removed on maturation. N168, N337, and N344 each carry an N-linked (GlcNAc...) asparagine glycan. 2 cysteine pairs are disulfide-bonded: C299–C365 and C328–C396.

This sequence belongs to the TGF-beta family. As to quaternary structure, monomer. The propeptide region interacts with bmp4 in a non-covalent manner. As to expression, expressed in the dorsal marginal region of late blastula, becoming restricted to the Spemann organizer at the early gastrula stage.

Its subcellular location is the secreted. Its function is as follows. Exhibits mesoderm-dorsalizing activity and neural-inducing activity, but lacks mesoderm-inducing activity. Regulates the expression of specific mesodermal and neural genes. Induces convergent extension movements at the embryonic midline by activating the fgf signaling pathway to induce t/bra expression in the organizer region. Acts with wnt11 to induce Spemann organizer cells and induce axis formation. The unprocessed protein antagonizes bmp-signaling. This is Nodal homolog 3-A from Xenopus tropicalis (Western clawed frog).